The following is a 110-amino-acid chain: UPF0145 protein BLD_1357 (110 aa).

This sequence belongs to the UPF0145 family.

This Bifidobacterium longum (strain DJO10A) protein is UPF0145 protein BLD_1357.